Reading from the N-terminus, the 168-residue chain is Putative defense protein 1 (168 aa).

The signal sequence occupies residues 1–18; that stretch reads MMFAYIVAVVSALALTSA. The 150-residue stretch at 19-168 folds into the Reelin domain; sequence FPTGAPRSAC…SAPVKILSHH (150 aa). An intrachain disulfide couples Cys-28 to Cys-105.

The protein belongs to the insect defense protein family. In terms of tissue distribution, very highly expressed in midgut, and highly expressed in fat body, silk gland and epidermis.

The protein resides in the secreted. Its function is as follows. As this protein is expressed upon bacterial infection, it may have antimicrobial activity. This chain is Putative defense protein 1, found in Antheraea mylitta (Tasar silkworm).